The primary structure comprises 226 residues: Ribonuclease 3 (226 aa).

The RNase III domain maps to 2 to 129 (IESISKIIKY…LIGAIYLDGG (128 aa)). Glutamate 42 contacts Mg(2+). Residue aspartate 46 is part of the active site. Mg(2+)-binding residues include asparagine 115 and glutamate 118. Glutamate 118 is a catalytic residue. The DRBM domain occupies 154 to 223 (DAKTILQELV…ASLMLNQIHN (70 aa)).

It belongs to the ribonuclease III family. Homodimer. Mg(2+) serves as cofactor.

The protein localises to the cytoplasm. It carries out the reaction Endonucleolytic cleavage to 5'-phosphomonoester.. Its function is as follows. Digests double-stranded RNA. Involved in the processing of primary rRNA transcript to yield the immediate precursors to the large and small rRNAs (23S and 16S). Processes some mRNAs, and tRNAs when they are encoded in the rRNA operon. Processes pre-crRNA and tracrRNA of type II CRISPR loci if present in the organism. The chain is Ribonuclease 3 from Ehrlichia chaffeensis (strain ATCC CRL-10679 / Arkansas).